We begin with the raw amino-acid sequence, 483 residues long: Scarecrow-like protein 26 (483 aa).

One can recognise a GRAS domain in the interval 95–477 (KTDESKGLRL…RRLVSASFWA (383 aa)). Positions 102-165 (LRLVHLLVAA…SKLLERDSVL (64 aa)) are leucine repeat I (LRI). Residues 184-251 (FELLQNMSPY…PSAQHLRITA (68 aa)) form a VHIID region. The VHIID signature appears at 215–219 (IHIVD). The tract at residues 267-299 (ETGRRLTAFADSIGQPFSYQHCKLDTNAFSTSS) is leucine repeat II (LRII). Positions 308–400 (VVINCMLHLP…RVFIGPWVAN (93 aa)) are PFYRE. The interval 403–477 (TRITANDAEV…RRLVSASFWA (75 aa)) is SAW.

This sequence belongs to the GRAS family. In terms of tissue distribution, expressed in seedlings, roots, leaves and flowers.

The protein resides in the nucleus. Probable transcription factor involved in plant development. This chain is Scarecrow-like protein 26 (SCL26), found in Arabidopsis thaliana (Mouse-ear cress).